The following is an 82-amino-acid chain: MAKVDQITKKRAMTGNTRSHALNHSRRRWDLNLQKVKIYDENNNIVEVKVTARTLKGLKKNNKVVKVDYSKPAKVYGQNSPK.

Positions 1–25 are disordered; sequence MAKVDQITKKRAMTGNTRSHALNHS.

Belongs to the bacterial ribosomal protein bL28 family.

In Malacoplasma penetrans (strain HF-2) (Mycoplasma penetrans), this protein is Large ribosomal subunit protein bL28.